A 236-amino-acid chain; its full sequence is Sperm flagellar protein 1 (236 aa).

The region spanning 7–112 is the Calponin-homology (CH) domain; it reads EEALHQLYLW…VLIPLRQRLE (106 aa). The tract at residues 118 to 177 is disordered; it reads RKQGIGSLQELAPQDGTDYMDVGLSQKARGEGVPDPQGRGQLREGRLPVPRPPGDSQALQ. Residues 183–236 form an essential for homodimerization and microtubule bundling activity region; sequence ILQIAEKEQELLASQETVQVLQMKVRRLEHLLQLKNVRIEDLSRRLQQAERKQR.

In terms of assembly, homodimer. Interacts with actin, TJP1, CGN and CDH1.

It localises to the cytoplasm. It is found in the cell projection. The protein resides in the cilium. Its subcellular location is the flagellum. The protein localises to the cytoskeleton. It localises to the cilium axoneme. It is found in the apical cell membrane. The protein resides in the basolateral cell membrane. Its subcellular location is the stress fiber. The protein localises to the microvillus. It localises to the lamellipodium. It is found in the filopodium. Its function is as follows. Microtubule-associated protein involved in the stabilization of microtubules along the axis of migration during radial intercalation. Promotes the establishment and stabilization of an axis of microtubules required for the active migration of cells into the outer epithelium. Microtubule-associated protein that promotes microtubule bundling and stabilizes microtubules against depolymerization in response to cold shock. Essential for ciliary central apparatus formation which requires both its microtubule-binding and bundling activities and for ciliary localization of HYDIN and SPAG6 in ependymal cilia. Binds actin in intestinal epithelial cells (IECs), essential for IECs survival and contributes to formation of filopodia and lamellipodia in migrating IECs. Regulates planar cell polarity signaling pathway and asymmetric microtubule accumulation in ciliated epithelia. The chain is Sperm flagellar protein 1 (SPEF1) from Bos taurus (Bovine).